We begin with the raw amino-acid sequence, 354 residues long: UDP-N-acetylglucosamine--N-acetylmuramyl-(pentapeptide) pyrophosphoryl-undecaprenol N-acetylglucosamine transferase (354 aa).

Residues 13–15 (SGG), Asn-125, Ser-189, Ile-242, 261–266 (ALTVSE), and Gln-286 contribute to the UDP-N-acetyl-alpha-D-glucosamine site.

It belongs to the glycosyltransferase 28 family. MurG subfamily.

It localises to the cell inner membrane. It carries out the reaction di-trans,octa-cis-undecaprenyl diphospho-N-acetyl-alpha-D-muramoyl-L-alanyl-D-glutamyl-meso-2,6-diaminopimeloyl-D-alanyl-D-alanine + UDP-N-acetyl-alpha-D-glucosamine = di-trans,octa-cis-undecaprenyl diphospho-[N-acetyl-alpha-D-glucosaminyl-(1-&gt;4)]-N-acetyl-alpha-D-muramoyl-L-alanyl-D-glutamyl-meso-2,6-diaminopimeloyl-D-alanyl-D-alanine + UDP + H(+). The protein operates within cell wall biogenesis; peptidoglycan biosynthesis. Cell wall formation. Catalyzes the transfer of a GlcNAc subunit on undecaprenyl-pyrophosphoryl-MurNAc-pentapeptide (lipid intermediate I) to form undecaprenyl-pyrophosphoryl-MurNAc-(pentapeptide)GlcNAc (lipid intermediate II). This chain is UDP-N-acetylglucosamine--N-acetylmuramyl-(pentapeptide) pyrophosphoryl-undecaprenol N-acetylglucosamine transferase, found in Buchnera aphidicola subsp. Acyrthosiphon pisum (strain APS) (Acyrthosiphon pisum symbiotic bacterium).